Reading from the N-terminus, the 884-residue chain is Alanine--tRNA ligase (884 aa).

Residues His-562, His-566, Cys-674, and His-678 each contribute to the Zn(2+) site.

Belongs to the class-II aminoacyl-tRNA synthetase family. It depends on Zn(2+) as a cofactor.

Its subcellular location is the cytoplasm. The catalysed reaction is tRNA(Ala) + L-alanine + ATP = L-alanyl-tRNA(Ala) + AMP + diphosphate. Catalyzes the attachment of alanine to tRNA(Ala) in a two-step reaction: alanine is first activated by ATP to form Ala-AMP and then transferred to the acceptor end of tRNA(Ala). Also edits incorrectly charged Ser-tRNA(Ala) and Gly-tRNA(Ala) via its editing domain. The polypeptide is Alanine--tRNA ligase (Rhizobium etli (strain ATCC 51251 / DSM 11541 / JCM 21823 / NBRC 15573 / CFN 42)).